We begin with the raw amino-acid sequence, 802 residues long: LPS-assembly protein LptD (802 aa).

An N-terminal signal peptide occupies residues 1 to 29; that stretch reads MARLFSLKPLVLALGFCFGTHCAAADAVA.

It belongs to the LptD family. Component of the lipopolysaccharide transport and assembly complex. Interacts with LptE and LptA.

The protein resides in the cell outer membrane. In terms of biological role, together with LptE, is involved in the assembly of lipopolysaccharide (LPS) at the surface of the outer membrane. This chain is LPS-assembly protein LptD, found in Neisseria meningitidis serogroup A / serotype 4A (strain DSM 15465 / Z2491).